Reading from the N-terminus, the 406-residue chain is Vitamin D3 dihydroxylase (406 aa).

The span at Met-1–Ala-15 shows a compositional bias: low complexity. Residues Met-1–Tyr-24 are disordered. Thr-81 lines the calciol pocket. The heme site is built by His-103 and Arg-107. Calciol is bound by residues Arg-193, Ser-236, and Ile-293. Residues Arg-297, His-353, and Cys-355 each contribute to the heme site.

The protein belongs to the cytochrome P450 family. The cofactor is heme.

It localises to the cytoplasm. The enzyme catalyses calciol + 2 reduced [2Fe-2S]-[ferredoxin] + O2 + 2 H(+) = calcidiol + 2 oxidized [2Fe-2S]-[ferredoxin] + H2O. It catalyses the reaction calcidiol + 2 reduced [2Fe-2S]-[ferredoxin] + O2 + 2 H(+) = calcitriol + 2 oxidized [2Fe-2S]-[ferredoxin] + H2O. Its function is as follows. Involved in the metabolism of vitamin D3 (calciol) and of a number of sulfonylurea herbicides. Catalyzes the two-step hydroxylation (25- and 1-alpha-hydroxylation) of vitamin D3 (VD3) to yield its active form 1-alpha,25-dihydroxyvitamin D3 (calcitriol). The first step is the hydroxylation of the C-25 position of VD3 to produce 25-hydroxyvitamin D3 (calcidiol). The second reaction is the hydroxylation of the C1-alpha-position of calcidiol to produce calcitriol. It can also hydroxylate vitamin D2. The protein is Vitamin D3 dihydroxylase of Streptomyces griseolus.